A 271-amino-acid polypeptide reads, in one-letter code: Bifunctional protein FolD (271 aa).

NADP(+) contacts are provided by residues Gly-154–Ser-156, Thr-181, and Ile-222.

This sequence belongs to the tetrahydrofolate dehydrogenase/cyclohydrolase family. Homodimer.

The enzyme catalyses (6R)-5,10-methylene-5,6,7,8-tetrahydrofolate + NADP(+) = (6R)-5,10-methenyltetrahydrofolate + NADPH. It carries out the reaction (6R)-5,10-methenyltetrahydrofolate + H2O = (6R)-10-formyltetrahydrofolate + H(+). It participates in one-carbon metabolism; tetrahydrofolate interconversion. Functionally, catalyzes the oxidation of 5,10-methylenetetrahydrofolate to 5,10-methenyltetrahydrofolate and then the hydrolysis of 5,10-methenyltetrahydrofolate to 10-formyltetrahydrofolate. In Thermosipho africanus (strain TCF52B), this protein is Bifunctional protein FolD.